Consider the following 183-residue polypeptide: Acyl-homoserine-lactone synthase (183 aa).

Belongs to the autoinducer synthase family.

It carries out the reaction a fatty acyl-[ACP] + S-adenosyl-L-methionine = an N-acyl-L-homoserine lactone + S-methyl-5'-thioadenosine + holo-[ACP] + H(+). In terms of biological role, involved in the synthesis of the acyl-homoserine lactone (AHL) signal N-(3-hydroxydodecanoyl)-L-HSL (3-hydroxy-C(12)-HSL or OH-dDHL). Probably part of a quorum-sensing system with AnoR. The chain is Acyl-homoserine-lactone synthase from Acinetobacter nosocomialis.